Consider the following 462-residue polypeptide: ATP synthase subunit beta (462 aa).

ATP is bound at residue 149 to 156; the sequence is GGAGVGKT.

This sequence belongs to the ATPase alpha/beta chains family. In terms of assembly, F-type ATPases have 2 components, CF(1) - the catalytic core - and CF(0) - the membrane proton channel. CF(1) has five subunits: alpha(3), beta(3), gamma(1), delta(1), epsilon(1). CF(0) has three main subunits: a(1), b(2) and c(9-12). The alpha and beta chains form an alternating ring which encloses part of the gamma chain. CF(1) is attached to CF(0) by a central stalk formed by the gamma and epsilon chains, while a peripheral stalk is formed by the delta and b chains.

Its subcellular location is the cell inner membrane. The enzyme catalyses ATP + H2O + 4 H(+)(in) = ADP + phosphate + 5 H(+)(out). In terms of biological role, produces ATP from ADP in the presence of a proton gradient across the membrane. The catalytic sites are hosted primarily by the beta subunits. The protein is ATP synthase subunit beta of Fusobacterium nucleatum subsp. nucleatum (strain ATCC 25586 / DSM 15643 / BCRC 10681 / CIP 101130 / JCM 8532 / KCTC 2640 / LMG 13131 / VPI 4355).